A 351-amino-acid chain; its full sequence is Snurportin-1 (351 aa).

Disordered stretches follow at residues 1–66 (MESS…QKGI) and 294–322 (EQKK…EYDS). Positions 8–42 (LYKKGLDIGEQQKQRQKELLKQQKLRRQQEQDDYR) are enriched in basic and acidic residues. Positions 52-62 (PRKKSGKRSGH) are enriched in basic residues. Residues 274–330 (VLQYMDAFEQKLAEHRRTLKEQKKKVNEQKEDPHTMEAEEDVESDEYDSLKRVLDQQ) are a coiled coil. Residues 294 to 310 (EQKKKVNEQKEDPHTME) show a composition bias toward basic and acidic residues. Positions 311–320 (AEEDVESDEY) are enriched in acidic residues.

Belongs to the snurportin family. As to quaternary structure, interacts with components of the snRNP complex including SmB and Smn; these interactions are RNA-dependent. Interacts with importin-7 msk but not with importin subunit beta Fs(2)Ket; the interaction is RNA-dependent.

The protein resides in the nucleus. It is found in the cytoplasm. Its subcellular location is the U-body. The protein localises to the nucleus speckle. It localises to the cajal body. In terms of biological role, functions as an U snRNP-specific nuclear import adapter. Involved in the trimethylguanosine (m3G)-cap-dependent nuclear import of U snRNPs. Binds specifically to the terminal m3G-cap U snRNAs. The chain is Snurportin-1 from Drosophila melanogaster (Fruit fly).